The following is a 128-amino-acid chain: Large ribosomal subunit protein bL12 (128 aa).

The protein belongs to the bacterial ribosomal protein bL12 family. As to quaternary structure, homodimer. Part of the ribosomal stalk of the 50S ribosomal subunit. Forms a multimeric L10(L12)X complex, where L10 forms an elongated spine to which 2 to 4 L12 dimers bind in a sequential fashion. Binds GTP-bound translation factors.

Forms part of the ribosomal stalk which helps the ribosome interact with GTP-bound translation factors. Is thus essential for accurate translation. This Sulfurihydrogenibium sp. (strain YO3AOP1) protein is Large ribosomal subunit protein bL12.